The chain runs to 876 residues: Leucine--tRNA ligase (876 aa).

A 'HIGH' region motif is present at residues 43–53; sequence PYPSGRIHMGH. Residues 632-636 carry the 'KMSKS' region motif; the sequence is KMSKS. Lysine 635 lines the ATP pocket.

It belongs to the class-I aminoacyl-tRNA synthetase family.

Its subcellular location is the cytoplasm. It catalyses the reaction tRNA(Leu) + L-leucine + ATP = L-leucyl-tRNA(Leu) + AMP + diphosphate. The protein is Leucine--tRNA ligase of Sinorhizobium fredii (strain NBRC 101917 / NGR234).